The primary structure comprises 161 residues: Small ribosomal subunit protein uS9 (161 aa).

2 disordered regions span residues methionine 1–proline 28 and lysine 142–arginine 161.

It belongs to the universal ribosomal protein uS9 family.

The protein is Small ribosomal subunit protein uS9 of Clavibacter sepedonicus (Clavibacter michiganensis subsp. sepedonicus).